A 365-amino-acid polypeptide reads, in one-letter code: tRNA/tmRNA (uracil-C(5))-methyltransferase (365 aa).

S-adenosyl-L-methionine-binding residues include Gln-189, Tyr-217, Asn-222, Glu-238, and Asp-298. The active-site Nucleophile is the Cys-323. Glu-357 (proton acceptor) is an active-site residue.

This sequence belongs to the class I-like SAM-binding methyltransferase superfamily. RNA M5U methyltransferase family. TrmA subfamily.

The enzyme catalyses uridine(54) in tRNA + S-adenosyl-L-methionine = 5-methyluridine(54) in tRNA + S-adenosyl-L-homocysteine + H(+). It catalyses the reaction uridine(341) in tmRNA + S-adenosyl-L-methionine = 5-methyluridine(341) in tmRNA + S-adenosyl-L-homocysteine + H(+). In terms of biological role, dual-specificity methyltransferase that catalyzes the formation of 5-methyluridine at position 54 (m5U54) in all tRNAs, and that of position 341 (m5U341) in tmRNA (transfer-mRNA). This Shewanella frigidimarina (strain NCIMB 400) protein is tRNA/tmRNA (uracil-C(5))-methyltransferase.